Consider the following 140-residue polypeptide: Large ribosomal subunit protein uL11 (140 aa).

It belongs to the universal ribosomal protein uL11 family. Part of the ribosomal stalk of the 50S ribosomal subunit. Interacts with L10 and the large rRNA to form the base of the stalk. L10 forms an elongated spine to which L12 dimers bind in a sequential fashion forming a multimeric L10(L12)X complex. One or more lysine residues are methylated.

In terms of biological role, forms part of the ribosomal stalk which helps the ribosome interact with GTP-bound translation factors. This is Large ribosomal subunit protein uL11 from Staphylococcus epidermidis (strain ATCC 35984 / DSM 28319 / BCRC 17069 / CCUG 31568 / BM 3577 / RP62A).